Reading from the N-terminus, the 383-residue chain is UDP-N-acetylglucosamine--N-acetylmuramyl-(pentapeptide) pyrophosphoryl-undecaprenol N-acetylglucosamine transferase (383 aa).

Residues 10 to 12 (TGG), asparagine 124, arginine 165, serine 190, isoleucine 245, and glutamine 290 each bind UDP-N-acetyl-alpha-D-glucosamine. Positions 364–383 (PFGQAREPGQKPARPPDLAS) are disordered.

The protein belongs to the glycosyltransferase 28 family. MurG subfamily.

Its subcellular location is the cell inner membrane. It catalyses the reaction di-trans,octa-cis-undecaprenyl diphospho-N-acetyl-alpha-D-muramoyl-L-alanyl-D-glutamyl-meso-2,6-diaminopimeloyl-D-alanyl-D-alanine + UDP-N-acetyl-alpha-D-glucosamine = di-trans,octa-cis-undecaprenyl diphospho-[N-acetyl-alpha-D-glucosaminyl-(1-&gt;4)]-N-acetyl-alpha-D-muramoyl-L-alanyl-D-glutamyl-meso-2,6-diaminopimeloyl-D-alanyl-D-alanine + UDP + H(+). It participates in cell wall biogenesis; peptidoglycan biosynthesis. Functionally, cell wall formation. Catalyzes the transfer of a GlcNAc subunit on undecaprenyl-pyrophosphoryl-MurNAc-pentapeptide (lipid intermediate I) to form undecaprenyl-pyrophosphoryl-MurNAc-(pentapeptide)GlcNAc (lipid intermediate II). The polypeptide is UDP-N-acetylglucosamine--N-acetylmuramyl-(pentapeptide) pyrophosphoryl-undecaprenol N-acetylglucosamine transferase (Anaeromyxobacter sp. (strain K)).